The following is a 267-amino-acid chain: MSQHILKNTIEDLELVRSKSPLVHNITNYVVMNNTANALLAIGASPIMAHAIEEVEEMVTICSATVINIGTLSEPWIQSMEKAAKKAVSLGKPLVLDPVGAGASNIRNAAIRRILDAGNPTIVRGNASEILSTLSSSGKTKGVDATDSSESAVETGKSLSKVTGGVVVISGATDFILKGTDMAQISNGDALMTKVTGLGCTASALCGAFAAVQKDQFRAATSAMAVMGIAGEMAKSKTASPGSFQVAFLDALYELNADTIKQKLNAK.

Met-48 provides a ligand contact to substrate. ATP is bound by residues Arg-124 and Ser-170. Gly-197 serves as a coordination point for substrate.

Belongs to the Thz kinase family. Requires Mg(2+) as cofactor.

The enzyme catalyses 5-(2-hydroxyethyl)-4-methylthiazole + ATP = 4-methyl-5-(2-phosphooxyethyl)-thiazole + ADP + H(+). Its pathway is cofactor biosynthesis; thiamine diphosphate biosynthesis; 4-methyl-5-(2-phosphoethyl)-thiazole from 5-(2-hydroxyethyl)-4-methylthiazole: step 1/1. Catalyzes the phosphorylation of the hydroxyl group of 4-methyl-5-beta-hydroxyethylthiazole (THZ). The chain is Hydroxyethylthiazole kinase from Leptospira biflexa serovar Patoc (strain Patoc 1 / Ames).